Consider the following 395-residue polypeptide: RNA demethylase ALKBH5 (395 aa).

Disordered regions lie at residues 1 to 28 (MAAASGYTDLREKLKSMTSRDNYKAGSR) and 47 to 83 (AAEPYPVSGTTKRKYQEDSDPERSDYEEHQLQKEEEA). The residue at position 2 (A2) is an N-acetylalanine. Residue K58 forms a Glycyl lysine isopeptide (Lys-Gly) (interchain with G-Cter in ubiquitin) linkage. Residues 60–83 (KYQEDSDPERSDYEEHQLQKEEEA) are compositionally biased toward basic and acidic residues. Residues S65 and S70 each carry the phosphoserine modification. The stretch at 68-117 (ERSDYEEHQLQKEEEARKVKSGIRQIRLFSQDECSKIEARIDEVVSRAEK) forms a coiled coil. A Phosphotyrosine modification is found at Y72. K87 participates in a covalent cross-link: Glycyl lysine isopeptide (Lys-Gly) (interchain with G-Cter in SUMO1). At S88 the chain carries Phosphoserine. K133 is subject to N6-acetyllysine. Y140 is a catalytic residue. Residues N194, Y196, and H205 each contribute to the 2-oxoglutarate site. C231 and C268 form a disulfide bridge. N6-acetyllysine is present on K236. 2 residues coordinate 2-oxoglutarate: H267 and R278. Positions 294 to 395 (ETKSLSSSTL…PTRKVKMRRH (102 aa)) are disordered. The span at 296-306 (KSLSSSTLPPS) shows a compositional bias: low complexity. Residue K322 forms a Glycyl lysine isopeptide (Lys-Gly) (interchain with G-Cter in SUMO1) linkage. S326 is modified (phosphoserine). K329 is covalently cross-linked (Glycyl lysine isopeptide (Lys-Gly) (interchain with G-Cter in SUMO2)). Basic and acidic residues predominate over residues 329–350 (KADPDAAHRPRILEMDKEENRR). At R360 the chain carries Omega-N-methylarginine. 4 positions are modified to phosphoserine: S362, S372, S375, and S385.

It belongs to the alkB family. In terms of assembly, monomer. Interacts with RBM33; promoting desumoylation by SENP1 and recruitment to N(6)-methyladenosine-containing mRNAs. Interacts (when acetylated by KAT8) with PSPC1; interaction facilitates recognition of N(6)-methyladenosine (m6A) mRNA. The cofactor is Fe(2+). Phosphorylated at Ser-88 and Ser-326 in response to reactive oxygen species (ROS), promoting sumoylation and inactivation. In terms of processing, acetylated by KAT8 at Lys-236, promoting interaction with PSPC1, thereby facilitating recognition of N(6)-methyladenosine (m6A) mRNA by ALKBH5. Deacetylated at Lys-236 by HDAC7. Post-translationally, sumoylated at Lys-87 and Lys-322 by PIAS4 following phosphorylation at Ser-88 and Ser-326 in response to reactive oxygen species (ROS), inhibiting the RNA demethylase activity. Desumoylated by SENP1; relieving RNA demethylase inhibition, leading to N(6)-methyladenosine-containing mRNAs demethylation. Ubiquitinated at Lys-58 via 'Lys-48'-linked polyubiquitin chain, leading to its degradation by the proteasome. Deubiquitinated at Lys-58 by USP9X, promoting its stabilizazion.

The protein localises to the nucleus speckle. The enzyme catalyses an N(6)-methyladenosine in mRNA + 2-oxoglutarate + O2 = an adenosine in mRNA + formaldehyde + succinate + CO2. Its activity is regulated as follows. RNA demethylase activity is inhibited following sumoylation. Inhibition is relieved following desumoylation. Functionally, dioxygenase that specifically demethylates N(6)-methyladenosine (m6A) RNA, the most prevalent internal modification of messenger RNA (mRNA) in higher eukaryotes. Demethylates RNA by oxidative demethylation, which requires molecular oxygen, alpha-ketoglutarate and iron. Demethylation of m6A mRNA affects mRNA processing, translation and export. Can also demethylate N(6)-methyladenosine in single-stranded DNA (in vitro). Required for the late meiotic and haploid phases of spermatogenesis by mediating m6A demethylation in spermatocytes and round spermatids: m6A demethylation of target transcripts is required for correct splicing and the production of longer 3'-UTR mRNAs in male germ cells. Involved in paraspeckle assembly, a nuclear membraneless organelle, by undergoing liquid-liquid phase separation. Paraspeckle assembly is coupled with m6A demethylation of RNAs, such as NEAT1 non-coding RNA. Also acts as a negative regulator of T-cell development: inhibits gamma-delta T-cell proliferation via demethylation of JAG1 and NOTCH2 transcripts. Inhibits regulatory T-cell (Treg) recruitment by mediating demethylation and destabilization of CCL28 mRNAs. The sequence is that of RNA demethylase ALKBH5 (Alkbh5) from Rattus norvegicus (Rat).